The primary structure comprises 414 residues: CinA-like protein (414 aa).

It belongs to the CinA family.

This Koribacter versatilis (strain Ellin345) protein is CinA-like protein.